The sequence spans 343 residues: Nod factor export ATP-binding protein I (343 aa).

Polar residues predominate over residues 1 to 14; it reads MQLLTRANVSSSPS. Positions 1–38 are disordered; sequence MQLLTRANVSSSPSRRPESNALKQKCHGHSNADNSLSR. An ABC transporter domain is found at 45 to 275; the sequence is IELTNVSKSY…QIGCDVIEIY (231 aa). 77–84 is a binding site for ATP; sequence GPNGAGKS.

This sequence belongs to the ABC transporter superfamily. Lipooligosaccharide exporter (TC 3.A.1.102) family. The complex is composed of two ATP-binding proteins (NodI) and two transmembrane proteins (NodJ).

It is found in the cell inner membrane. In terms of biological role, part of the ABC transporter complex NodIJ involved in the export of the nodulation factors (Nod factors), the bacterial signal molecules that induce symbiosis and subsequent nodulation induction. Nod factors are LCO (lipo-chitin oligosaccharide), a modified beta-1,4-linked N-acetylglucosamine oligosaccharide. This subunit is responsible for energy coupling to the transport system. This Sinorhizobium fredii (strain NBRC 101917 / NGR234) protein is Nod factor export ATP-binding protein I.